The sequence spans 194 residues: Small ribosomal subunit protein uS4c (194 aa).

The segment at 1–29 (RFKKIRRLGTLPGLTSKRPRSGSDLKNPL) is disordered. Positions 82–143 (MRLDNILFRL…KQRSKALIQN (62 aa)) constitute an S4 RNA-binding domain.

Belongs to the universal ribosomal protein uS4 family. Part of the 30S ribosomal subunit. Contacts protein S5. The interaction surface between S4 and S5 is involved in control of translational fidelity.

It localises to the plastid. It is found in the chloroplast. Functionally, one of the primary rRNA binding proteins, it binds directly to 16S rRNA where it nucleates assembly of the body of the 30S subunit. In terms of biological role, with S5 and S12 plays an important role in translational accuracy. The sequence is that of Small ribosomal subunit protein uS4c (rps4) from Furcraea foetida (Mauritius hemp).